A 225-amino-acid polypeptide reads, in one-letter code: NAD(P)H-quinone oxidoreductase subunit K, chloroplastic (225 aa).

Residues C43, C44, C108, and C139 each contribute to the [4Fe-4S] cluster site.

Belongs to the complex I 20 kDa subunit family. NDH is composed of at least 16 different subunits, 5 of which are encoded in the nucleus. The cofactor is [4Fe-4S] cluster.

The protein localises to the plastid. Its subcellular location is the chloroplast thylakoid membrane. It carries out the reaction a plastoquinone + NADH + (n+1) H(+)(in) = a plastoquinol + NAD(+) + n H(+)(out). It catalyses the reaction a plastoquinone + NADPH + (n+1) H(+)(in) = a plastoquinol + NADP(+) + n H(+)(out). NDH shuttles electrons from NAD(P)H:plastoquinone, via FMN and iron-sulfur (Fe-S) centers, to quinones in the photosynthetic chain and possibly in a chloroplast respiratory chain. The immediate electron acceptor for the enzyme in this species is believed to be plastoquinone. Couples the redox reaction to proton translocation, and thus conserves the redox energy in a proton gradient. In Carica papaya (Papaya), this protein is NAD(P)H-quinone oxidoreductase subunit K, chloroplastic.